The primary structure comprises 20 residues: Phylloseptin-O1 (20 aa).

Gly-20 carries the post-translational modification Glycine amide.

Expressed by the skin glands.

The protein resides in the secreted. Its function is as follows. Has antiprotozoal activity against T.cruzi. This chain is Phylloseptin-O1 (psn4), found in Pithecopus oreades (Orange-legged leaf frog).